The chain runs to 493 residues: MTLVDKFVTHVISESSFEEMDRIYLTNRVLARVGEGVLEVETNLDKLIDLKDQLVEEAVRLETIEDSQTAREILGTELMDLVTPCPSQVNRDFWEAYAYSPEQAIEDFYQLSRKNDYIKLKAIAKNIAYRVPSDYGELEITINLSKPEKDPKEIAVAKLVQASNYPQCQLCLENEGYHGRVNHPARSNHRIIRFEMVGQEWGFQYSPYAYFNEHCIFLDGQHRPMAISRQSFERLLAIVEQFPGYFAGSNADLPIVGGSILTHDHYQGGRHVFPMELAPLQKTFRFAGFEQVKAGIIKWPMSVLRLTSDSKEDLINLADKIFQEWRQYSDSSVQILAETDGTPHHTITPIARKRDGQFELDLVLRDNQTSAEHPDGIYHPHKDVQHIKKENIGLIEVMGLAILPPRLKEEVEQVASYLVGEAVTVADYHQEWADQLKSQHPDLTDKEKALAIVKDSVGAIFVRVLEDAGVYKQTEQGQTAFMRFVEQVGILLD.

It belongs to the galactose-1-phosphate uridylyltransferase type 2 family.

It localises to the cytoplasm. The catalysed reaction is alpha-D-galactose 1-phosphate + UDP-alpha-D-glucose = alpha-D-glucose 1-phosphate + UDP-alpha-D-galactose. Its pathway is carbohydrate metabolism; galactose metabolism. The polypeptide is Galactose-1-phosphate uridylyltransferase (Streptococcus pneumoniae serotype 19F (strain G54)).